The chain runs to 351 residues: Outer membrane protein A (351 aa).

An N-terminal signal peptide occupies residues 1-21 (MKKTAIAITVALAGFATVAQA). A run of 8 beta stranded transmembrane segments spans residues 27–37 (TWYTGAKLGWS), 55–66 (QLGAGAFGGYQV), 70–78 (VGFEMGYDW), 96–107 (QGVQLTAKLGYP), 112–120 (LDVYTRLGG), 147–156 (PVFAGGVEWA), 161–168 (IATRLEYQ), and 187–195 (LLSLGVSYR). 4 tandem repeats follow at residues 206–207 (AP), 208–209 (AP), 210–211 (AP), and 212–213 (AP). Residues 206–213 (APAPAPAP) form a 4 X 2 AA tandem repeats of A-P region. An OmpA-like domain is found at 215 to 343 (VQTKHFTLKS…RVEIEVKGIK (129 aa)). A disulfide bond links cysteine 316 and cysteine 328.

Belongs to the outer membrane OOP (TC 1.B.6) superfamily. OmpA family. As to quaternary structure, monomer and homodimer.

It localises to the cell outer membrane. Its function is as follows. With TolR probably plays a role in maintaining the position of the peptidoglycan cell wall in the periplasm. Acts as a porin with low permeability that allows slow penetration of small solutes; an internal gate slows down solute passage. Required for conjugation with F-type plasmids; probably serves as the mating receptor on recipient cells. This is Outer membrane protein A from Shigella dysenteriae.